The primary structure comprises 69 residues: Pantinin-1 (69 aa).

The first 23 residues, 1–23 (MKTQFVILMITVILMQMLVQTEG), serve as a signal peptide directing secretion. Valine 37 carries the valine amide modification. Positions 41–69 (GLNDRDQLDDLFDSDLSDADIKLLKEMFK) are excised as a propeptide.

Belongs to the non-disulfide-bridged peptide (NDBP) superfamily. Short antimicrobial peptide (group 4) family. As to expression, expressed by the venom gland.

The protein resides in the secreted. Its subcellular location is the target cell membrane. Its function is as follows. Amphipathic peptide that possesses relatively strong activities against Gram-positive bacteria and a fungus, but has very weak antimicrobial activities against Gram-negative bacteria. Also exhibits very low hemolytic activities against human erythrocytes (64 uM induce 21% of hemolysis). Minimal inhibitory concentration (MIC) are the following: 8 uM against S.aureus, 32 uM against B.magaterium, 32 uM against M.luteus, 28 uM against vancomycin-resistant Enterococci, 14 uM against methicillin-resistant S.aureus, 62 uM against E.coli, &gt;87 uM against P.putida, &gt;87 uM against K.oxytoca, 76 uM against E.cloacae, 72 uM against S.enterica and 16 uM against the fungus C.tropicalis. The protein is Pantinin-1 of Pandinus imperator (Emperor scorpion).